Consider the following 386-residue polypeptide: Succinate--CoA ligase [ADP-forming] subunit beta (386 aa).

Residues 9–244 (KAILRSYGVS…LDEEDPKEIE (236 aa)) enclose the ATP-grasp domain. ATP is bound by residues Lys-46, 53–55 (GRG), Glu-99, Cys-102, and Glu-107. Residues Asn-199 and Asp-213 each coordinate Mg(2+). Substrate is bound by residues Asn-264 and 321 to 323 (GIM).

The protein belongs to the succinate/malate CoA ligase beta subunit family. Heterotetramer of two alpha and two beta subunits. The cofactor is Mg(2+).

It catalyses the reaction succinate + ATP + CoA = succinyl-CoA + ADP + phosphate. The enzyme catalyses GTP + succinate + CoA = succinyl-CoA + GDP + phosphate. It participates in carbohydrate metabolism; tricarboxylic acid cycle; succinate from succinyl-CoA (ligase route): step 1/1. Its function is as follows. Succinyl-CoA synthetase functions in the citric acid cycle (TCA), coupling the hydrolysis of succinyl-CoA to the synthesis of either ATP or GTP and thus represents the only step of substrate-level phosphorylation in the TCA. The beta subunit provides nucleotide specificity of the enzyme and binds the substrate succinate, while the binding sites for coenzyme A and phosphate are found in the alpha subunit. This Bacillus cytotoxicus (strain DSM 22905 / CIP 110041 / 391-98 / NVH 391-98) protein is Succinate--CoA ligase [ADP-forming] subunit beta.